We begin with the raw amino-acid sequence, 141 residues long: ATP synthase epsilon chain (141 aa).

Belongs to the ATPase epsilon chain family. As to quaternary structure, F-type ATPases have 2 components, CF(1) - the catalytic core - and CF(0) - the membrane proton channel. CF(1) has five subunits: alpha(3), beta(3), gamma(1), delta(1), epsilon(1). CF(0) has three main subunits: a, b and c.

It is found in the cell inner membrane. Produces ATP from ADP in the presence of a proton gradient across the membrane. The chain is ATP synthase epsilon chain from Pseudomonas fluorescens (strain Pf0-1).